A 542-amino-acid polypeptide reads, in one-letter code: Katanin p60 ATPase-containing subunit A-like 2 (542 aa).

In terms of domain architecture, LisH spans 25-57 (RRKNLLILIMHYLLQEGYMDSANSLEQETKISL). Disordered regions lie at residues 94 to 126 (LDHDSRVQSKPRSAGKLRRAGSNSTQGLPRIAQ) and 142 to 168 (HAHQKALSRENSKQENGGNSPREASEI). Residues 114-126 (GSNSTQGLPRIAQ) show a composition bias toward polar residues. 298–305 (GPPGTGKT) provides a ligand contact to ATP.

The protein belongs to the AAA ATPase family. Katanin p60 subunit A1 subfamily. A-like 2 sub-subfamily.

The protein localises to the cytoplasm. Its subcellular location is the cytoskeleton. It localises to the spindle. The protein resides in the spindle pole. The enzyme catalyses n ATP + n H2O + a microtubule = n ADP + n phosphate + (n+1) alpha/beta tubulin heterodimers.. Severs microtubules in vitro in an ATP-dependent manner. This activity may promote rapid reorganization of cellular microtubule arrays. The sequence is that of Katanin p60 ATPase-containing subunit A-like 2 (katnal2) from Xenopus tropicalis (Western clawed frog).